Consider the following 231-residue polypeptide: Enolase-phosphatase E1 (231 aa).

Belongs to the HAD-like hydrolase superfamily. MasA/MtnC family. Monomer. Requires Mg(2+) as cofactor.

It catalyses the reaction 5-methylsulfanyl-2,3-dioxopentyl phosphate + H2O = 1,2-dihydroxy-5-(methylsulfanyl)pent-1-en-3-one + phosphate. It participates in amino-acid biosynthesis; L-methionine biosynthesis via salvage pathway; L-methionine from S-methyl-5-thio-alpha-D-ribose 1-phosphate: step 3/6. Its pathway is amino-acid biosynthesis; L-methionine biosynthesis via salvage pathway; L-methionine from S-methyl-5-thio-alpha-D-ribose 1-phosphate: step 4/6. Functionally, bifunctional enzyme that catalyzes the enolization of 2,3-diketo-5-methylthiopentyl-1-phosphate (DK-MTP-1-P) into the intermediate 2-hydroxy-3-keto-5-methylthiopentenyl-1-phosphate (HK-MTPenyl-1-P), which is then dephosphorylated to form the acireductone 1,2-dihydroxy-3-keto-5-methylthiopentene (DHK-MTPene). The chain is Enolase-phosphatase E1 from Stenotrophomonas maltophilia (strain R551-3).